Consider the following 308-residue polypeptide: MSVRGRVAPSQTPSRIPGTVLAYLALTKPRVIELLLVTAIPAMLLAQRGTVNPLLIVNTLIGGMLAAGGANALNCVADADIDKVMKRTARRPLARAAVPTRNALVFGLVLTAGSFLWLWWTTNLLSGLLALATIAFYVFIYTLLLKRRTSQNVVWGGAAGCMPVMIGWSAVTGTIQWPALVMFAIIFFWTPPHTWALAMRYKDDYKAAGVPMLPAVATERQVTKQIVVYTWLTVLATLALALATGWLYAAVALVAGVWFLAMAHQLYAGVRAGEPVKPLRLFLQSNNYLAVVFCALAIDSAIGLPHLF.

A run of 8 helical transmembrane segments spans residues 31 to 51 (VIEL…RGTV), 53 to 73 (PLLI…ANAL), 102 to 122 (NALV…WWTT), 124 to 144 (LLSG…YTLL), 149 to 169 (TSQN…IGWS), 170 to 190 (AVTG…FFWT), 240 to 260 (LALA…VWFL), and 288 to 308 (YLAV…PHLF).

It belongs to the UbiA prenyltransferase family. Protoheme IX farnesyltransferase subfamily.

It localises to the cell membrane. The catalysed reaction is heme b + (2E,6E)-farnesyl diphosphate + H2O = Fe(II)-heme o + diphosphate. Its pathway is porphyrin-containing compound metabolism; heme O biosynthesis; heme O from protoheme: step 1/1. Functionally, converts heme B (protoheme IX) to heme O by substitution of the vinyl group on carbon 2 of heme B porphyrin ring with a hydroxyethyl farnesyl side group. The sequence is that of Protoheme IX farnesyltransferase from Mycolicibacterium paratuberculosis (strain ATCC BAA-968 / K-10) (Mycobacterium paratuberculosis).